Consider the following 142-residue polypeptide: Transcriptional regulator MraZ (142 aa).

SpoVT-AbrB domains lie at 5-51 (ASAL…PRPE) and 77-120 (AMDV…DSQT).

Belongs to the MraZ family. As to quaternary structure, forms oligomers.

The protein resides in the cytoplasm. It localises to the nucleoid. The protein is Transcriptional regulator MraZ of Burkholderia ambifaria (strain MC40-6).